We begin with the raw amino-acid sequence, 361 residues long: Nicotinate-nucleotide--dimethylbenzimidazole phosphoribosyltransferase (361 aa).

Glu315 serves as the catalytic Proton acceptor.

This sequence belongs to the CobT family.

The enzyme catalyses 5,6-dimethylbenzimidazole + nicotinate beta-D-ribonucleotide = alpha-ribazole 5'-phosphate + nicotinate + H(+). It functions in the pathway nucleoside biosynthesis; alpha-ribazole biosynthesis; alpha-ribazole from 5,6-dimethylbenzimidazole: step 1/2. Catalyzes the synthesis of alpha-ribazole-5'-phosphate from nicotinate mononucleotide (NAMN) and 5,6-dimethylbenzimidazole (DMB). The chain is Nicotinate-nucleotide--dimethylbenzimidazole phosphoribosyltransferase from Clostridium perfringens (strain 13 / Type A).